The following is a 384-amino-acid chain: Proteinase K (384 aa).

The signal sequence occupies residues 1 to 15; the sequence is MRLSVLLSLLPLALG. Positions 16-105 are excised as a propeptide; the sequence is APAVEQRSEA…IEQDAVVTIN (90 aa). The Inhibitor I9 domain occupies 39–104; sequence KYIVKFKEGS…YIEQDAVVTI (66 aa). The 273-residue stretch at 112–384 folds into the Peptidase S8 domain; sequence PWGLARISST…NLLAYNNYQA (273 aa). T121 serves as a coordination point for Ca(2+). C139 and C228 are oxidised to a cystine. Residues D144 and H174 each act as charge relay system in the active site. Ca(2+) contacts are provided by P280, V282, and D305. C283 and C354 are oxidised to a cystine. The active-site Charge relay system is S329. D365 is a binding site for Ca(2+).

This sequence belongs to the peptidase S8 family. Ca(2+) is required as a cofactor.

The catalysed reaction is Hydrolysis of keratin, and of other proteins with subtilisin-like specificity. Hydrolyzes peptide amides.. In terms of biological role, hydrolyzes keratin at aromatic and hydrophobic residues. This is Proteinase K (PROK) from Parengyodontium album (Tritirachium album).